A 114-amino-acid chain; its full sequence is Large ribosomal subunit protein uL22 (114 aa).

The protein belongs to the universal ribosomal protein uL22 family. Part of the 50S ribosomal subunit.

This protein binds specifically to 23S rRNA; its binding is stimulated by other ribosomal proteins, e.g. L4, L17, and L20. It is important during the early stages of 50S assembly. It makes multiple contacts with different domains of the 23S rRNA in the assembled 50S subunit and ribosome. Functionally, the globular domain of the protein is located near the polypeptide exit tunnel on the outside of the subunit, while an extended beta-hairpin is found that lines the wall of the exit tunnel in the center of the 70S ribosome. The polypeptide is Large ribosomal subunit protein uL22 (Desulfitobacterium hafniense (strain Y51)).